The primary structure comprises 349 residues: Aminomethyltransferase (349 aa).

This sequence belongs to the GcvT family. In terms of assembly, the glycine cleavage system is composed of four proteins: P, T, L and H.

The enzyme catalyses N(6)-[(R)-S(8)-aminomethyldihydrolipoyl]-L-lysyl-[protein] + (6S)-5,6,7,8-tetrahydrofolate = N(6)-[(R)-dihydrolipoyl]-L-lysyl-[protein] + (6R)-5,10-methylene-5,6,7,8-tetrahydrofolate + NH4(+). In terms of biological role, the glycine cleavage system catalyzes the degradation of glycine. The protein is Aminomethyltransferase of Thermus thermophilus (strain ATCC 27634 / DSM 579 / HB8).